A 188-amino-acid chain; its full sequence is Protein Cripto (188 aa).

The N-terminal stretch at 1–30 (MDCRKMARFSYSVIWIMAISKVFELGLVAG) is a signal peptide. In terms of domain architecture, EGF-like spans 78–107 (LNRTCCLNGGTCMLGSFCACPPSFYGRNCE). N-linked (GlcNAc...) asparagine glycosylation occurs at Asn79. Cystine bridges form between Cys82-Cys89, Cys83-Cys95, Cys97-Cys106, Cys115-Cys133, Cys128-Cys149, and Cys131-Cys140. Asp150 is lipidated: GPI-anchor amidated aspartate. A propeptide spans 151 to 188 (GLVMDEHLVASRTPELPPSARTTTFMLVGICLSIQSYY) (removed in mature form).

The protein belongs to the EGF-CFC (Cripto-1/FRL1/Cryptic) family. In terms of assembly, interacts with the activin type-1 receptor ACVR1B. Post-translationally, the GPI-anchor is attached to the protein in the endoplasmic reticulum and serves to target the protein to the cell surface. There, it is processed by GPI processing phospholipase A2 (TMEM8A), removing an acyl-chain at the sn-2 position of GPI and releasing CRIPTO as a lysophosphatidylinositol-bearing form, which is further cleaved by phospholipase D (GPLD1) into a soluble form. In terms of tissue distribution, preferentially expressed in gastric and colorectal carcinomas than in their normal counterparts. Expressed in breast and lung.

Its subcellular location is the cell membrane. The protein resides in the secreted. GPI-anchored cell membrane protein involved in Nodal signaling. Cell-associated CRIPTO acts as a Nodal coreceptor in cis. Shedding of CRIPTO by TMEM8A modulates Nodal signaling by allowing soluble CRIPTO to act as a Nodal coreceptor on other cells. Could play a role in the determination of the epiblastic cells that subsequently give rise to the mesoderm. This is Protein Cripto from Homo sapiens (Human).